Consider the following 703-residue polypeptide: Prolyl 3-hydroxylase 2 (703 aa).

The N-terminal stretch at 1–21 (MRESTWVSLLLLLLLPTPQRG) is a signal peptide. The interval 17–40 (TPQRGGPQDGRRSPEPEPERGPLQ) is disordered. Over residues 25 to 36 (DGRRSPEPEPER) the composition is skewed to basic and acidic residues. TPR repeat units follow at residues 42–75 (FDLLYASGVAAYYSGDYERAVRDLEAALSSHRRL), 144–177 (RVPYNYLQRAYIKLNQLEKAMEAAHTFFMANPEH), 205–238 (HLESYNAGVKHYEADDFESAIKYFEQALREYFNE), and 301–334 (PLHYDYLQFAYYRVGEYVKALECAKAYLMFHPDN). N-linked (GlcNAc...) asparagine glycosylation is found at Asn-444 and Asn-544. The Fe2OG dioxygenase domain occupies 552-666 (THMVCRTALS…RCAVALWFTL (115 aa)). The Fe cation site is built by His-575, Asp-577, and His-647. Residue Arg-657 is part of the active site. The short motif at 700–703 (KDEL) is the Prevents secretion from ER element.

The protein belongs to the leprecan family. Requires Fe cation as cofactor. It depends on L-ascorbate as a cofactor. Detected in kidney. Detected on kidney tubular cells, pancreas acinar cells, Schwann cells of the peripheral nerve in the pinna, and in tunica adventitia, the smooth muscle layer of the aortic wall (at protein level). Detected in lung, skeletal muscle and kidney. Detected in kidney glomeruli and in prehypertrophic regions of long bone from neonates. In the eye, detected in the epithelial layer of the cornea and at lower levels in the sclera at the posterior end of the eye.

Its subcellular location is the endoplasmic reticulum. The protein localises to the sarcoplasmic reticulum. The protein resides in the golgi apparatus. It catalyses the reaction L-prolyl-[collagen] + 2-oxoglutarate + O2 = trans-3-hydroxy-L-prolyl-[collagen] + succinate + CO2. Prolyl 3-hydroxylase that catalyzes the post-translational formation of 3-hydroxyproline on collagens. Contributes to proline 3-hydroxylation of collagen COL4A1 and COL1A1 in tendons, the eye sclera and in the eye lens capsule. Has high activity with the type IV collagen COL4A1, and lower activity with COL1A1. Catalyzes hydroxylation of the first Pro in Gly-Pro-Hyp sequences where Hyp is 4-hydroxyproline. Has no activity on substrates that have proline instead of 4-hydroxyproline in the third position. The polypeptide is Prolyl 3-hydroxylase 2 (Mus musculus (Mouse)).